A 387-amino-acid chain; its full sequence is Pepsin-3 (387 aa).

The signal sequence occupies residues 1–15 (MKWLLLLGLLALSEC). The propeptide at 16–59 (IIHKVPLVRKKSLRKNLIEKGLLKDYLKTHTPNLATKYLPKAAF) is activation peptide. In terms of domain architecture, Peptidase A1 spans 75 to 384 (YFGTIGIGTP…DRANNQLGLA (310 aa)). The active site involves Asp93. Intrachain disulfides connect Cys106/Cys111 and Cys267/Cys271. Asp276 is an active-site residue. Cys310 and Cys343 are oxidised to a cystine.

It belongs to the peptidase A1 family.

The protein resides in the secreted. It carries out the reaction Preferential cleavage: hydrophobic, preferably aromatic, residues in P1 and P1' positions. Cleaves 1-Phe-|-Val-2, 4-Gln-|-His-5, 13-Glu-|-Ala-14, 14-Ala-|-Leu-15, 15-Leu-|-Tyr-16, 16-Tyr-|-Leu-17, 23-Gly-|-Phe-24, 24-Phe-|-Phe-25 and 25-Phe-|-Tyr-26 bonds in the B chain of insulin.. Shows particularly broad specificity; although bonds involving phenylalanine and leucine are preferred, many others are also cleaved to some extent. The sequence is that of Pepsin-3 from Oryctolagus cuniculus (Rabbit).